A 444-amino-acid polypeptide reads, in one-letter code: 23S rRNA (uracil(1939)-C(5))-methyltransferase RlmD (444 aa).

Residues Arg-5–Glu-67 form the TRAM domain. The [4Fe-4S] cluster site is built by Cys-80, Cys-86, Cys-89, and Cys-168. Residues Gln-276, Phe-305, Asn-310, Glu-326, Asp-353, and Asp-374 each coordinate S-adenosyl-L-methionine. Cys-400 functions as the Nucleophile in the catalytic mechanism.

The protein belongs to the class I-like SAM-binding methyltransferase superfamily. RNA M5U methyltransferase family. RlmD subfamily.

The enzyme catalyses uridine(1939) in 23S rRNA + S-adenosyl-L-methionine = 5-methyluridine(1939) in 23S rRNA + S-adenosyl-L-homocysteine + H(+). In terms of biological role, catalyzes the formation of 5-methyl-uridine at position 1939 (m5U1939) in 23S rRNA. The protein is 23S rRNA (uracil(1939)-C(5))-methyltransferase RlmD of Xanthomonas euvesicatoria pv. vesicatoria (strain 85-10) (Xanthomonas campestris pv. vesicatoria).